A 595-amino-acid chain; its full sequence is Phenylalanine--tRNA ligase beta subunit (595 aa).

The 3'-CCA residue in tRNA stretch occupies residues 86–90 (KLSKP). A B5 domain is found at 292–370 (FNDRIMDVSI…VGYGFNNLPK (79 aa)). Mg(2+) is bound by residues Asp348, Asp354, Glu357, and Asp358.

It belongs to the phenylalanyl-tRNA synthetase beta subunit family. Type 2 subfamily. In terms of assembly, tetramer of two alpha and two beta subunits. Mg(2+) serves as cofactor.

The protein localises to the cytoplasm. The enzyme catalyses tRNA(Phe) + L-phenylalanine + ATP = L-phenylalanyl-tRNA(Phe) + AMP + diphosphate + H(+). The sequence is that of Phenylalanine--tRNA ligase beta subunit (FRS1) from Saccharomyces cerevisiae (strain ATCC 204508 / S288c) (Baker's yeast).